A 135-amino-acid polypeptide reads, in one-letter code: Dihydromethanopterin reductase (135 aa).

NADP(+) contacts are provided by residues alanine 9, 16-21 (LGLNGH), 52-54 (PKT), and 93-97 (GGIAV).

As to quaternary structure, homodimer.

The enzyme catalyses 5,6,7,8-tetrahydromethanopterin + NAD(+) = 7,8-dihydromethanopterin + NADH + H(+). It catalyses the reaction 5,6,7,8-tetrahydromethanopterin + NADP(+) = 7,8-dihydromethanopterin + NADPH + H(+). The protein operates within cofactor biosynthesis; 5,6,7,8-tetrahydromethanopterin biosynthesis. Its function is as follows. Catalyzes the reduction of dihydromethanopterin (H(2)MPT) to tetrahydromethanopterin (H(4)MPT). Shows preference for NADPH rather than NADH as electron donor. Does not reduce dihydrofolate. The protein is Dihydromethanopterin reductase (dmrA) of Methylorubrum extorquens (strain ATCC 14718 / DSM 1338 / JCM 2805 / NCIMB 9133 / AM1) (Methylobacterium extorquens).